A 181-amino-acid chain; its full sequence is Peptidyl-prolyl cis-trans isomerase H (181 aa).

Positions 17-180 constitute a PPIase cyclophilin-type domain; sequence FFDITLGGES…QDVTIIQCGE (164 aa).

This sequence belongs to the cyclophilin-type PPIase family. PPIase H subfamily.

It localises to the nucleus. It catalyses the reaction [protein]-peptidylproline (omega=180) = [protein]-peptidylproline (omega=0). Functionally, PPIases accelerate the folding of proteins. It catalyzes the cis-trans isomerization of proline imidic peptide bonds in oligopeptides. In Aspergillus oryzae (strain ATCC 42149 / RIB 40) (Yellow koji mold), this protein is Peptidyl-prolyl cis-trans isomerase H (cyp3).